Here is an 85-residue protein sequence, read N- to C-terminus: YcgL domain-containing protein ECA2367 (85 aa).

Residues 1–85 enclose the YcgL domain; the sequence is MFCVIYRSVK…PVESLLTTPV (85 aa).

In Pectobacterium atrosepticum (strain SCRI 1043 / ATCC BAA-672) (Erwinia carotovora subsp. atroseptica), this protein is YcgL domain-containing protein ECA2367.